A 255-amino-acid polypeptide reads, in one-letter code: Aprataxin and PNK-like factor (255 aa).

The span at 1-11 (MSATDASTADS) shows a compositional bias: low complexity. 3 disordered regions span residues 1–117 (MSAT…VSSS), 131–168 (RRNP…FGNA), and 195–255 (RLRQ…DDYD). 3 stretches are compositionally biased toward basic and acidic residues: residues 12 to 22 (GAKRKSSEDIT), 40 to 64 (KSEE…KAEP), and 137 to 150 (RSAE…DYRR). 2 consecutive PBZ-type zinc fingers follow at residues 121-142 (TSCR…AEAH) and 161-182 (PACP…DYSH). Positions 207–218 (DDSGTDEEDEPF) are enriched in acidic residues. The span at 221 to 230 (DNDRDADYRP) shows a compositional bias: basic and acidic residues. Positions 234 to 244 (INEDEDDELEF) are enriched in acidic residues.

This sequence belongs to the APLF family.

Displays apurinic-apyrimidinic (AP) endonuclease and 3'-5' exonuclease activities in vitro. This Drosophila melanogaster (Fruit fly) protein is Aprataxin and PNK-like factor.